Reading from the N-terminus, the 274-residue chain is NH(3)-dependent NAD(+) synthetase (274 aa).

46 to 53 (GISGGQDS) lines the ATP pocket. Asp52 provides a ligand contact to Mg(2+). Arg140 provides a ligand contact to deamido-NAD(+). Thr160 is an ATP binding site. Residue Glu165 coordinates Mg(2+). Deamido-NAD(+) is bound by residues Lys173 and Asp180. The ATP site is built by Lys189 and Thr211. 260–261 (HK) is a binding site for deamido-NAD(+).

This sequence belongs to the NAD synthetase family. Homodimer.

The catalysed reaction is deamido-NAD(+) + NH4(+) + ATP = AMP + diphosphate + NAD(+) + H(+). The protein operates within cofactor biosynthesis; NAD(+) biosynthesis; NAD(+) from deamido-NAD(+) (ammonia route): step 1/1. Its function is as follows. Catalyzes the ATP-dependent amidation of deamido-NAD to form NAD. Uses ammonia as a nitrogen source. This chain is NH(3)-dependent NAD(+) synthetase, found in Streptococcus pneumoniae serotype 19F (strain G54).